We begin with the raw amino-acid sequence, 482 residues long: MARGPDTARRWATLVVLAALSTAVTTTNPGIVARITQKGLDYACQQGVLTLQKELEKITIPNFSGNFKIKYLGKGQYSFFSMVIQGFNLPNSQIRPLPDKGLDLSIRDASIKIRGKWKARKNFIKLGGNFDLSVEGISILAGLNLGYDPASGHSTVTCSSCSSGINTVRIHISGSSLGWLIQLFRKRIESLLQKSMTRKICEVVTSTVSSKLQPYFQTLPVTTKLDKVAGVDYSLVAPPRATANNLDWLLKGEFFSLAHRSPPPFAPPALAFPSDHDRMVYLGISEYFFNTAGFVYQKAGALNLTLRDDMIPKESKFRLTTKFFGILIPQVAKMFPDMQMQLFIWASLPPKLTMKPSGLDLIFVLDTQAFAILPNSSLDPLFLLEMNLNLSVVVGAKSDRLIGELRLDKLLLELKHSDIGPFSVESLQSVINYVMPTIVLPVINKKLQKGFPLPLPAYIELFNLTLQPYQDFLLFGADVHYS.

The first 26 residues, 1–26 (MARGPDTARRWATLVVLAALSTAVTT), serve as a signal peptide directing secretion. Residues 27–36 (TNPGIVARIT) are central sheet, part 1. Residues 36–219 (TQKGLDYACQ…SKLQPYFQTL (184 aa)) form an N-terminal barrel region. N-linked (GlcNAc...) asparagine glycosylation occurs at asparagine 62. A disulfide bridge links cysteine 161 with cysteine 201. Residues 221 to 285 (VTTKLDKVAG…HDRMVYLGIS (65 aa)) are central sheet, part 2. The tract at residues 235–240 (LVAPPR) is cleavage sites for elastase. Residues 286–456 (EYFFNTAGFV…LQKGFPLPLP (171 aa)) form a C-terminal barrel region. N-linked (GlcNAc...) asparagine glycans are attached at residues asparagine 303, asparagine 375, asparagine 389, and asparagine 463. Residues 463 to 482 (NLTLQPYQDFLLFGADVHYS) are central sheet, part 3.

Belongs to the BPI/LBP/Plunc superfamily. BPI/LBP family. As to quaternary structure, monomer. Homodimer; disulfide-linked. As to expression, restricted to cells of the myeloid series.

Its subcellular location is the secreted. It localises to the cytoplasmic granule membrane. In terms of biological role, the cytotoxic action of BPI is limited to many species of Gram-negative bacteria; this specificity may be explained by a strong affinity of the very basic N-terminal half for the negatively charged lipopolysaccharides that are unique to the Gram-negative bacterial outer envelope. The chain is Bactericidal permeability-increasing protein (BPI) from Bos taurus (Bovine).